The primary structure comprises 249 residues: MTRYKATISYDGYAFAGFQRQPHARSVQEEIEKTLTRLNKGQAITVHGAGRTDSGVHALGQVIHFDLPYQMDEEKLRFALDTQSPEDIDVISIELVADDFHCRYAKHSKTYEFTVDRGRPKNPMRRHYATHFPYPLDVERMQIAIKKLEGTHDFTGFTASGTSVEDKVRTITEASLIVDETGQFLTFTFSGNGFLYKQIRNMVGTLLKIGNNRMPVEQIDLILEKKDRQLAGPTAAPNGLYLKEIRYEE.

D53 functions as the Nucleophile in the catalytic mechanism. Residue Y111 coordinates substrate.

It belongs to the tRNA pseudouridine synthase TruA family. Homodimer.

It carries out the reaction uridine(38/39/40) in tRNA = pseudouridine(38/39/40) in tRNA. Its function is as follows. Formation of pseudouridine at positions 38, 39 and 40 in the anticodon stem and loop of transfer RNAs. This is tRNA pseudouridine synthase A from Streptococcus pneumoniae (strain 70585).